A 175-amino-acid chain; its full sequence is MEKKRRARINVSLEQLRSLLERHYSHQIRKRKLEKADILELSVKYMRSLQNSLQGLWPVPSGVDYPSGFQGGLRGVSQRLRPGEGDSGLRCPLLLQRREGSTTDSANPQATSVLNPCLPAIWAPSRAAGGSHSPQSPLPLPGGLLESSTDVVAPHPASNCQAESTRPGFRVWRPW.

One can recognise a bHLH domain in the interval 1 to 49 (MEKKRRARINVSLEQLRSLLERHYSHQIRKRKLEKADILELSVKYMRSL). Residues 65–98 (YPSGFQGGLRGVSQRLRPGEGDSGLRCPLLLQRR) form the Orange domain. The disordered stretch occupies residues 126 to 166 (RAAGGSHSPQSPLPLPGGLLESSTDVVAPHPASNCQAESTR). Over residues 129-148 (GGSHSPQSPLPLPGGLLESS) the composition is skewed to low complexity. The short motif at 172–175 (WRPW) is the WRPW motif element.

In terms of assembly, transcription repression requires formation of a complex with a corepressor protein of the Groucho/TLE family.

The protein resides in the nucleus. Its function is as follows. Transcriptional repressor of genes that require a bHLH protein for their transcription. This Mus musculus (Mouse) protein is Transcription factor HES-3 (Hes3).